The primary structure comprises 367 residues: Peptide chain release factor 2 (367 aa).

The residue at position 251 (glutamine 251) is an N5-methylglutamine.

It belongs to the prokaryotic/mitochondrial release factor family. In terms of processing, methylated by PrmC. Methylation increases the termination efficiency of RF2.

The protein resides in the cytoplasm. Its function is as follows. Peptide chain release factor 2 directs the termination of translation in response to the peptide chain termination codons UGA and UAA. The sequence is that of Peptide chain release factor 2 from Nautilia profundicola (strain ATCC BAA-1463 / DSM 18972 / AmH).